The sequence spans 66 residues: uncharacterized protein (66 aa).

In terms of domain architecture, HTH cro/C1-type spans 5–59 (VKELRARFGYSQEKLGETVGVTRQTVAAIEKGDYVPSLLLALKICKAFSMKMEDV). Residues 16–35 (QEKLGETVGVTRQTVAAIEK) constitute a DNA-binding region (H-T-H motif).

This is an uncharacterized protein from Bacillus subtilis (strain 168).